A 366-amino-acid chain; its full sequence is Growth hormone secretagogue receptor type 1 (366 aa).

Residues 1 to 40 lie on the Extracellular side of the membrane; it reads MWNATPSEEPGFNLTLADLDWDASPGNDSLGDELLQLFPA. N-linked (GlcNAc...) asparagine glycans are attached at residues Asn13 and Asn27. The chain crosses the membrane as a helical span at residues 41-66; the sequence is PLLAGVTATCVALFVVGIAGNLLTML. Over 67-72 the chain is Cytoplasmic; it reads VVSRFR. The chain crosses the membrane as a helical span at residues 73 to 96; that stretch reads ELRTTTNLYLSSMAFSDLLIFLCM. Over 97–117 the chain is Extracellular; it reads PLDLVRLWQYRPWNFGDLLCK. Cys116 and Cys198 are joined by a disulfide. Residues 118-139 form a helical membrane-spanning segment; the sequence is LFQFVSESCTYATVLTITALSV. Over 140-162 the chain is Cytoplasmic; it reads ERYFAICFPLRAKVVVTKGRVKL. The helical transmembrane segment at 163–183 threads the bilayer; that stretch reads VIFVIWAVAFCSAGPIFVLVG. The Extracellular segment spans residues 184 to 211; the sequence is VEHENGTDPWDTNECRPTEFAVRSGLLT. Residues 212–235 traverse the membrane as a helical segment; that stretch reads VMVWVSSIFFFLPVFCLTVLYSLI. Over 236–263 the chain is Cytoplasmic; sequence GRKLWRRRRGDAVVGASLRDQNHKQTVK. A helical transmembrane segment spans residues 264 to 285; the sequence is MLAVVVFAFILCWLPFHVGRYL. At 286–302 the chain is on the extracellular side; sequence FSKSFEPGSLEIAQISQ. A helical membrane pass occupies residues 303–326; the sequence is YCNLVSFVLFYLSAAINPILYNIM. At 327–366 the chain is on the cytoplasmic side; the sequence is SKKYRVAVFRLLGFEPFSQRKLSTLKDESSRAWTESSINT.

This sequence belongs to the G-protein coupled receptor 1 family. Pituitary and hypothalamus.

Its subcellular location is the cell membrane. In terms of biological role, receptor for ghrelin, coupled to G-alpha-11 proteins. Stimulates growth hormone secretion. Also binds other growth hormone releasing peptides (GHRP) (e.g. Met-enkephalin and GHRP-6) as well as non-peptide, low molecular weight secretagogues (e.g. L-692,429, MK-0677, adenosine). This is Growth hormone secretagogue receptor type 1 (GHSR) from Homo sapiens (Human).